A 208-amino-acid polypeptide reads, in one-letter code: Attacin-A (208 aa).

The signal sequence occupies residues 1–20; the sequence is MQSFKICFFISCLSVVLVKG. Positions 21-47 are excised as a propeptide; it reads QFGGTVSSNPNGGLDVNARLSKTIGDP.

Hemolymph and fat body.

The protein localises to the secreted. Its function is as follows. Hemolymph antibacterial protein against Gram-negative bacteria. This chain is Attacin-A, found in Glossina morsitans morsitans (Savannah tsetse fly).